The following is a 654-amino-acid chain: Fructose-1,6-bisphosphatase class 3 (654 aa).

The segment at 288-307 is disordered; that stretch reads NPAFKPKKRPDKHERLTQRE. The segment covering 298 to 307 has biased composition (basic and acidic residues); that stretch reads DKHERLTQRE.

Belongs to the FBPase class 3 family. The cofactor is Mn(2+).

It catalyses the reaction beta-D-fructose 1,6-bisphosphate + H2O = beta-D-fructose 6-phosphate + phosphate. It functions in the pathway carbohydrate biosynthesis; gluconeogenesis. This Staphylococcus aureus (strain Mu3 / ATCC 700698) protein is Fructose-1,6-bisphosphatase class 3.